A 359-amino-acid polypeptide reads, in one-letter code: Methylthioribose-1-phosphate isomerase (359 aa).

Substrate is bound by residues 52-54 (RGA), R90, and Q200. The Proton donor role is filled by D241. 251-252 (NK) lines the substrate pocket.

This sequence belongs to the eIF-2B alpha/beta/delta subunits family. MtnA subfamily.

The enzyme catalyses 5-(methylsulfanyl)-alpha-D-ribose 1-phosphate = 5-(methylsulfanyl)-D-ribulose 1-phosphate. The protein operates within amino-acid biosynthesis; L-methionine biosynthesis via salvage pathway; L-methionine from S-methyl-5-thio-alpha-D-ribose 1-phosphate: step 1/6. Catalyzes the interconversion of methylthioribose-1-phosphate (MTR-1-P) into methylthioribulose-1-phosphate (MTRu-1-P). This Sulfurimonas denitrificans (strain ATCC 33889 / DSM 1251) (Thiomicrospira denitrificans (strain ATCC 33889 / DSM 1251)) protein is Methylthioribose-1-phosphate isomerase.